Consider the following 556-residue polypeptide: Oxygen-dependent choline dehydrogenase (556 aa).

An FAD-binding site is contributed by 6-35 (DYIIIGAGSAGNVLAARLTEDPGVTVLLLE). Histidine 475 acts as the Proton acceptor in catalysis.

It belongs to the GMC oxidoreductase family. Requires FAD as cofactor.

The enzyme catalyses choline + A = betaine aldehyde + AH2. The catalysed reaction is betaine aldehyde + NAD(+) + H2O = glycine betaine + NADH + 2 H(+). It functions in the pathway amine and polyamine biosynthesis; betaine biosynthesis via choline pathway; betaine aldehyde from choline (cytochrome c reductase route): step 1/1. Involved in the biosynthesis of the osmoprotectant glycine betaine. Catalyzes the oxidation of choline to betaine aldehyde and betaine aldehyde to glycine betaine at the same rate. In Xanthomonas axonopodis pv. citri (strain 306), this protein is Oxygen-dependent choline dehydrogenase.